The sequence spans 1216 residues: ATP-dependent helicase/nuclease subunit A (1216 aa).

Residues 26 to 488 (QKKTAEQIEA…IILKENFRSS (463 aa)) form the UvrD-like helicase ATP-binding domain. 47-54 (ASAGSGKT) lines the ATP pocket. Residues 515 to 802 (KHQLVFANTK…ELMTIHKSKG (288 aa)) form the UvrD-like helicase C-terminal domain.

It belongs to the helicase family. AddA subfamily. As to quaternary structure, heterodimer of AddA and AddB/RexB. Requires Mg(2+) as cofactor.

It catalyses the reaction Couples ATP hydrolysis with the unwinding of duplex DNA by translocating in the 3'-5' direction.. The enzyme catalyses ATP + H2O = ADP + phosphate + H(+). Functionally, the heterodimer acts as both an ATP-dependent DNA helicase and an ATP-dependent, dual-direction single-stranded exonuclease. Recognizes the chi site generating a DNA molecule suitable for the initiation of homologous recombination. The AddA nuclease domain is required for chi fragment generation; this subunit has the helicase and 3' -&gt; 5' nuclease activities. The chain is ATP-dependent helicase/nuclease subunit A from Streptococcus pneumoniae serotype 2 (strain D39 / NCTC 7466).